The primary structure comprises 247 residues: Cell division protein ZapD (247 aa).

This sequence belongs to the ZapD family. As to quaternary structure, interacts with FtsZ.

It localises to the cytoplasm. Functionally, cell division factor that enhances FtsZ-ring assembly. Directly interacts with FtsZ and promotes bundling of FtsZ protofilaments, with a reduction in FtsZ GTPase activity. This Escherichia coli O157:H7 protein is Cell division protein ZapD.